We begin with the raw amino-acid sequence, 131 residues long: Large ribosomal subunit protein bL17 (131 aa).

It belongs to the bacterial ribosomal protein bL17 family. In terms of assembly, part of the 50S ribosomal subunit. Contacts protein L32.

The sequence is that of Large ribosomal subunit protein bL17 from Shewanella frigidimarina (strain NCIMB 400).